Reading from the N-terminus, the 286-residue chain is tRNA (guanine-N(7)-)-methyltransferase (286 aa).

Residues Gly-91, 114–115 (EI), 158–159 (NS), and Leu-178 contribute to the S-adenosyl-L-methionine site. Asp-181 is a catalytic residue. 256 to 258 (TEE) is a binding site for S-adenosyl-L-methionine.

This sequence belongs to the class I-like SAM-binding methyltransferase superfamily. TrmB family. As to quaternary structure, forms a complex with TRM82.

Its subcellular location is the nucleus. It catalyses the reaction guanosine(46) in tRNA + S-adenosyl-L-methionine = N(7)-methylguanosine(46) in tRNA + S-adenosyl-L-homocysteine. The protein operates within tRNA modification; N(7)-methylguanine-tRNA biosynthesis. Its function is as follows. Catalyzes the formation of N(7)-methylguanine at position 46 (m7G46) in tRNA. The sequence is that of tRNA (guanine-N(7)-)-methyltransferase from Cryptococcus neoformans var. neoformans serotype D (strain B-3501A) (Filobasidiella neoformans).